The sequence spans 91 residues: MELDKIRNLSDEELKVEDNKAQEQLFRLRFQMKMGQTEGVKKLRELKKDVARIRTISRERVLAIRGAAPLAESSAPAKTKSRARKSKKEAL.

The disordered stretch occupies residues 67 to 91 (AAPLAESSAPAKTKSRARKSKKEAL). Over residues 79 to 91 (TKSRARKSKKEAL) the composition is skewed to basic residues.

Belongs to the universal ribosomal protein uL29 family.

This Acidobacterium capsulatum (strain ATCC 51196 / DSM 11244 / BCRC 80197 / JCM 7670 / NBRC 15755 / NCIMB 13165 / 161) protein is Large ribosomal subunit protein uL29.